We begin with the raw amino-acid sequence, 137 residues long: Structural protein A137R (137 aa).

The protein belongs to the asfivirus A137R family. As to quaternary structure, interacts with host TBK1.

Its subcellular location is the virion. The protein resides in the host cytoplasm. Plays a role in the inhibition of the host innate immune response. Mechanistically, promotes the autophagy-mediated lysosomal degradation of host TBK1 and affects IRF3 nuclear translocation to block type I IFN production. The protein is Structural protein A137R of African swine fever virus (isolate Warthog/Namibia/Wart80/1980) (ASFV).